Consider the following 198-residue polypeptide: 5'-deoxynucleotidase hdd1 (198 aa).

Positions 38 to 144 (IADHMYRMGI…VKDIDKFEMI (107 aa)) constitute an HD domain. Residues His41, His69, Asp70, Glu73, Asp78, Ile79, and Asp139 each coordinate a divalent metal cation.

This sequence belongs to the HDDC2 family. In terms of assembly, homodimer. Mn(2+) serves as cofactor. It depends on Co(2+) as a cofactor. The cofactor is Mg(2+).

The protein resides in the cytoplasm. The protein localises to the nucleus. It catalyses the reaction a 2'-deoxyribonucleoside 5'-phosphate + H2O = a 2'-deoxyribonucleoside + phosphate. Its function is as follows. Catalyzes the dephosphorylation of the nucleoside 5'-monophosphates deoxyadenosine monophosphate (dAMP), deoxycytidine monophosphate (dCMP), deoxyguanosine monophosphate (dGMP) and deoxythymidine monophosphate (dTMP). The protein is 5'-deoxynucleotidase hdd1 of Schizosaccharomyces pombe (strain 972 / ATCC 24843) (Fission yeast).